Reading from the N-terminus, the 365-residue chain is 2-aminoethylphosphonate--pyruvate transaminase (365 aa).

Lysine 194 carries the N6-(pyridoxal phosphate)lysine modification.

The protein belongs to the class-V pyridoxal-phosphate-dependent aminotransferase family. PhnW subfamily. As to quaternary structure, homodimer. Pyridoxal 5'-phosphate serves as cofactor.

The catalysed reaction is (2-aminoethyl)phosphonate + pyruvate = phosphonoacetaldehyde + L-alanine. Functionally, involved in phosphonate degradation. This is 2-aminoethylphosphonate--pyruvate transaminase from Bacillus cytotoxicus (strain DSM 22905 / CIP 110041 / 391-98 / NVH 391-98).